Here is a 270-residue protein sequence, read N- to C-terminus: MSKIAKTAIISPKAEVGKGVEIGEFCVIGDGIKLDDGVKLHNNVTLQGHTFIGKNTEIFPFVVLGTQPQDLKYKGEYSELIVGEDNLIREFCMINPGTEGGIKKTIIGDKNLLMAYVHVAHDCVIGNHCILANGVTLAGHVEVGDYVNIGGLTAIHQFVRIAKGSMIAGKSALGKDVPPYCLAEGNRAFIKGLNRHRMRQLLESKDIDFIHALYKRLFRPVLSLRESAKLELEEHANNPIVEEICSFILASSRGVAYKSSEYSSEEKQED.

This sequence belongs to the transferase hexapeptide repeat family. LpxA subfamily. As to quaternary structure, homotrimer.

Its subcellular location is the cytoplasm. It carries out the reaction a (3R)-hydroxyacyl-[ACP] + UDP-N-acetyl-alpha-D-glucosamine = a UDP-3-O-[(3R)-3-hydroxyacyl]-N-acetyl-alpha-D-glucosamine + holo-[ACP]. The protein operates within glycolipid biosynthesis; lipid IV(A) biosynthesis; lipid IV(A) from (3R)-3-hydroxytetradecanoyl-[acyl-carrier-protein] and UDP-N-acetyl-alpha-D-glucosamine: step 1/6. Functionally, involved in the biosynthesis of lipid A, a phosphorylated glycolipid that anchors the lipopolysaccharide to the outer membrane of the cell. This Helicobacter acinonychis (strain Sheeba) protein is Acyl-[acyl-carrier-protein]--UDP-N-acetylglucosamine O-acyltransferase.